The primary structure comprises 454 residues: Carbamoyl phosphate synthase arginine-specific small chain (454 aa).

A mitochondrion-targeting transit peptide spans 1 to 29; that stretch reads MMFSRFFKAVPARAPAFSSPLPVYQARTM. The 188-residue stretch at 219-406 folds into the Glutamine amidotransferase type-1 domain; the sequence is HVAVLDCGVK…IDSVKKYKNS (188 aa). Catalysis depends on C295, which acts as the Nucleophile. Catalysis depends on residues H379 and E381.

The protein belongs to the CarA family. In terms of assembly, heterodimer composed of 2 chains; the small (or glutamine) chain promotes the hydrolysis of glutamine to ammonia, which is used by the large (or ammonia) chain to synthesize carbamoyl phosphate.

The protein resides in the mitochondrion matrix. The catalysed reaction is hydrogencarbonate + L-glutamine + 2 ATP + H2O = carbamoyl phosphate + L-glutamate + 2 ADP + phosphate + 2 H(+). The enzyme catalyses L-glutamine + H2O = L-glutamate + NH4(+). The protein operates within amino-acid biosynthesis; L-arginine biosynthesis; carbamoyl phosphate from bicarbonate: step 1/1. Its function is as follows. Small subunit of the arginine-specific carbamoyl phosphate synthase (CPSase). CPSase catalyzes the formation of carbamoyl phosphate from the ammonia moiety of glutamine, carbonate, and phosphate donated by ATP, the first step of the arginine biosynthetic pathway. The small subunit (glutamine amidotransferase) binds and cleaves glutamine to supply the large subunit with the substrate ammonia. The chain is Carbamoyl phosphate synthase arginine-specific small chain (cpa-1) from Emericella nidulans (strain FGSC A4 / ATCC 38163 / CBS 112.46 / NRRL 194 / M139) (Aspergillus nidulans).